We begin with the raw amino-acid sequence, 295 residues long: RNA polymerase sigma factor RpoH (295 aa).

The interval 52-121 is sigma-70 factor domain-2; it reads MVTSHLRLVA…IQEYILRSWS (70 aa). An Interaction with polymerase core subunit RpoC motif is present at residues 76–79; sequence EVIS. Residues 230–281 form a sigma-70 factor domain-4 region; the sequence is AMVELTDRERHILTERRLKDDPTTLEELAAQYGVSRERVRQIEVRAFEKLQK. A DNA-binding region (H-T-H motif) is located at residues 254–273; it reads LEELAAQYGVSRERVRQIEV.

Belongs to the sigma-70 factor family. RpoH subfamily. As to quaternary structure, interacts with the RNA polymerase core enzyme.

Its subcellular location is the cytoplasm. Functionally, sigma factors are initiation factors that promote the attachment of RNA polymerase to specific initiation sites and are then released. This sigma factor is involved in regulation of expression of heat shock genes. This chain is RNA polymerase sigma factor RpoH, found in Caulobacter vibrioides (strain ATCC 19089 / CIP 103742 / CB 15) (Caulobacter crescentus).